The chain runs to 314 residues: Putative lipoprotein LppW (314 aa).

The signal sequence occupies residues 1–22; the sequence is MRARPLTLLTALAAVTLVVVAG. A lipid anchor (N-palmitoyl cysteine) is attached at cysteine 23. Cysteine 23 is lipidated: S-diacylglycerol cysteine.

It is found in the cell membrane. This is Putative lipoprotein LppW (lppW) from Mycobacterium bovis (strain ATCC BAA-935 / AF2122/97).